An 89-amino-acid chain; its full sequence is Small ribosomal subunit protein uS15 (89 aa).

The protein belongs to the universal ribosomal protein uS15 family. As to quaternary structure, part of the 30S ribosomal subunit. Forms a bridge to the 50S subunit in the 70S ribosome, contacting the 23S rRNA.

Its function is as follows. One of the primary rRNA binding proteins, it binds directly to 16S rRNA where it helps nucleate assembly of the platform of the 30S subunit by binding and bridging several RNA helices of the 16S rRNA. Forms an intersubunit bridge (bridge B4) with the 23S rRNA of the 50S subunit in the ribosome. This chain is Small ribosomal subunit protein uS15, found in Saccharophagus degradans (strain 2-40 / ATCC 43961 / DSM 17024).